Here is a 359-residue protein sequence, read N- to C-terminus: Serpentine receptor class epsilon-13 (359 aa).

7 helical membrane-spanning segments follow: residues 33 to 53 (YLFVFYIQIALIFIVLFYYLL), 74 to 94 (AIYLPCVLGHVMCLIQKILLI), 111 to 131 (ISLFRAIFCFPGFYCLSAFVA), 150 to 170 (WLVGLILWIIYSIAFISALDF), 180 to 200 (VTIFILLSCLAYLSNYLNFLL), 237 to 257 (LALSIAFFQISGPMCLLIDNL), and 266 to 286 (LNTVVFDTILLLYAIVTPFVI).

This sequence belongs to the nematode receptor-like protein sre family.

Its subcellular location is the membrane. This is Serpentine receptor class epsilon-13 (sre-13) from Caenorhabditis elegans.